Consider the following 646-residue polypeptide: Centrosomal protein of 72 kDa (646 aa).

LRR repeat units follow at residues E28 to L49, A54 to V75, and S76 to H97. In terms of domain architecture, LRRCT spans N110–H149. Phosphoserine is present on residues S117 and S236. Disordered regions lie at residues S300 to V342 and G357 to R399. Residues A307–K319 show a composition bias toward low complexity. At S380 the chain carries Phosphoserine. The segment covering E383–S392 has biased composition (basic and acidic residues). S402 carries the phosphoserine modification. Positions L476 to S622 form a coiled coil.

It belongs to the CEP72 family. As to quaternary structure, interacts with KIZ, PCM1 and CDK5RAP2.

The protein resides in the cytoplasm. It is found in the cytoskeleton. The protein localises to the microtubule organizing center. Its subcellular location is the centrosome. It localises to the centriolar satellite. Involved in the recruitment of key centrosomal proteins to the centrosome. Provides centrosomal microtubule-nucleation activity on the gamma-tubulin ring complexes (gamma-TuRCs) and has critical roles in forming a focused bipolar spindle, which is needed for proper tension generation between sister chromatids. Required for localization of KIZ, AKAP9 and gamma-tubulin ring complexes (gamma-TuRCs). Involved in centriole duplication. Required for CDK5RAP22, CEP152, WDR62 and CEP63 centrosomal localization and promotes the centrosomal localization of CDK2. The sequence is that of Centrosomal protein of 72 kDa (Cep72) from Mus musculus (Mouse).